The primary structure comprises 306 residues: MSNDALISALSHLVSEGRNPDTMDIDLLTSLEVVEKINQQDKQVPLAIEAELPQIAKAVDKIAQAFQNGGRLIYMGAGTSGRLGVLDASECPPTFGVSDKMVIGLIAGGPEAILKAKEGAEDSLTLGIEDLKAIQFSENDVVVGIAASGRTPYVIGALNYANQLGAVTVALSCNPDSPIAEIAQIAISPVVGPEALTGSTRLKSGTAQKLVLNMLTTASMIRIGKSYQNLMVDVKATNEKLVARAARIVIQATECEKALAVSTLKATDYDVKLSILMILTGLDLELAKAQLDKQNGFLRKAVENNQ.

An SIS domain is found at 62–225; that stretch reads IAQAFQNGGR…TTASMIRIGK (164 aa). The Proton donor role is filled by Glu90. Glu121 is an active-site residue.

It belongs to the GCKR-like family. MurNAc-6-P etherase subfamily. In terms of assembly, homodimer.

The enzyme catalyses N-acetyl-D-muramate 6-phosphate + H2O = N-acetyl-D-glucosamine 6-phosphate + (R)-lactate. It functions in the pathway amino-sugar metabolism; 1,6-anhydro-N-acetylmuramate degradation. Its pathway is amino-sugar metabolism; N-acetylmuramate degradation. It participates in cell wall biogenesis; peptidoglycan recycling. In terms of biological role, specifically catalyzes the cleavage of the D-lactyl ether substituent of MurNAc 6-phosphate, producing GlcNAc 6-phosphate and D-lactate. Together with AnmK, is also required for the utilization of anhydro-N-acetylmuramic acid (anhMurNAc) either imported from the medium or derived from its own cell wall murein, and thus plays a role in cell wall recycling. This is N-acetylmuramic acid 6-phosphate etherase from Vibrio atlanticus (strain LGP32) (Vibrio splendidus (strain Mel32)).